Consider the following 721-residue polypeptide: BBSome complex member BBS2 (721 aa).

Positions 325–369 (KGNLLDTSVEQGLIRELSQKKQNLLLELRNYEENTKAELSSPLNE) form a coiled coil.

Part of BBSome complex, that contains BBS1, BBS2, BBS4, BBS5, BBS7, BBS8/TTC8, BBS9 and BBIP10. Interacts (via C-terminus) with BBS7. Interacts (via coiled coil domain) with MKKS. Interacts with CCDC28B. Interacts with DLEC1.

The protein localises to the cell projection. Its subcellular location is the cilium membrane. The protein resides in the cytoplasm. It is found in the cytoskeleton. It localises to the microtubule organizing center. The protein localises to the centrosome. Its subcellular location is the centriolar satellite. Functionally, the BBSome complex is thought to function as a coat complex required for sorting of specific membrane proteins to the primary cilia. The BBSome complex is required for ciliogenesis but is dispensable for centriolar satellite function. This ciliogenic function is mediated in part by the Rab8 GDP/GTP exchange factor, which localizes to the basal body and contacts the BBSome. Rab8(GTP) enters the primary cilium and promotes extension of the ciliary membrane. Firstly the BBSome associates with the ciliary membrane and binds to RAB3IP/Rabin8, the guanosyl exchange factor (GEF) for Rab8 and then the Rab8-GTP localizes to the cilium and promotes docking and fusion of carrier vesicles to the base of the ciliary membrane. The BBSome complex, together with the LTZL1, controls SMO ciliary trafficking and contributes to the sonic hedgehog (SHH) pathway regulation. Required for proper BBSome complex assembly and its ciliary localization. The protein is BBSome complex member BBS2 (Bbs2) of Rattus norvegicus (Rat).